A 306-amino-acid polypeptide reads, in one-letter code: Protein farnesyltransferase/geranylgeranyltransferase type-1 subunit alpha (306 aa).

PFTA repeat units lie at residues 48-82, 84-118, 125-159, 161-195, and 201-235; these read YSERALHITELGINELASHYTIWIYRFNILKNLPN, NLYDELDWCEEIALDNEKNYQIWNYRQLIIGQIME, DPYREFPILEAMLSSDPKNHHVWSYRKWLVDTFDL, NDAKELSFVDKVIDTDLKNNSAWSHRFFLLFSKKH, and TIDEELNYVKDKIVKCPQNPSTWNYLLGIHERFDR.

This sequence belongs to the protein prenyltransferase subunit alpha family. In terms of assembly, heterodimer of an alpha and a beta subunit. Requires Mg(2+) as cofactor.

It catalyses the reaction L-cysteinyl-[protein] + (2E,6E)-farnesyl diphosphate = S-(2E,6E)-farnesyl-L-cysteinyl-[protein] + diphosphate. It carries out the reaction geranylgeranyl diphosphate + L-cysteinyl-[protein] = S-geranylgeranyl-L-cysteinyl-[protein] + diphosphate. Its function is as follows. Essential subunit of both the farnesyltransferase and the geranylgeranyltransferase complex. Contributes to the transfer of a farnesyl or geranylgeranyl moiety from farnesyl or geranylgeranyl diphosphate to a cysteine at the fourth position from the C-terminus of several proteins having the C-terminal sequence Cys-aliphatic-aliphatic-X. This Candida albicans (Yeast) protein is Protein farnesyltransferase/geranylgeranyltransferase type-1 subunit alpha (RAM2).